The chain runs to 253 residues: H repeat-associated putative transposase YbfD (253 aa).

The protein belongs to the transposase 11 family.

This is H repeat-associated putative transposase YbfD (ybfD) from Escherichia coli (strain K12).